A 336-amino-acid chain; its full sequence is Phospho-N-acetylmuramoyl-pentapeptide-transferase (336 aa).

10 helical membrane passes run 3 to 23, 53 to 73, 78 to 98, 118 to 138, 143 to 163, 174 to 194, 200 to 220, 226 to 246, 251 to 271, and 316 to 336; these read LTLI…PYFI, GGTV…LFSI, SLAL…IGFL, LALQ…PSGI, VFGY…FWVV, GIDG…GVIA, FDVL…FCFN, VFMG…ISIA, WTLL…MLQV, and AFLW…LYVF.

Belongs to the glycosyltransferase 4 family. MraY subfamily. The cofactor is Mg(2+).

Its subcellular location is the cell membrane. The catalysed reaction is UDP-N-acetyl-alpha-D-muramoyl-L-alanyl-gamma-D-glutamyl-L-lysyl-D-alanyl-D-alanine + di-trans,octa-cis-undecaprenyl phosphate = Mur2Ac(oyl-L-Ala-gamma-D-Glu-L-Lys-D-Ala-D-Ala)-di-trans,octa-cis-undecaprenyl diphosphate + UMP. It functions in the pathway cell wall biogenesis; peptidoglycan biosynthesis. Its function is as follows. Catalyzes the initial step of the lipid cycle reactions in the biosynthesis of the cell wall peptidoglycan: transfers peptidoglycan precursor phospho-MurNAc-pentapeptide from UDP-MurNAc-pentapeptide onto the lipid carrier undecaprenyl phosphate, yielding undecaprenyl-pyrophosphoryl-MurNAc-pentapeptide, known as lipid I. This Streptococcus pyogenes serotype M1 protein is Phospho-N-acetylmuramoyl-pentapeptide-transferase.